A 397-amino-acid chain; its full sequence is Tryptophan synthase beta chain (397 aa).

At lysine 86 the chain carries N6-(pyridoxal phosphate)lysine.

Belongs to the TrpB family. As to quaternary structure, tetramer of two alpha and two beta chains. The cofactor is pyridoxal 5'-phosphate.

The enzyme catalyses (1S,2R)-1-C-(indol-3-yl)glycerol 3-phosphate + L-serine = D-glyceraldehyde 3-phosphate + L-tryptophan + H2O. The protein operates within amino-acid biosynthesis; L-tryptophan biosynthesis; L-tryptophan from chorismate: step 5/5. The beta subunit is responsible for the synthesis of L-tryptophan from indole and L-serine. The protein is Tryptophan synthase beta chain of Aeromonas salmonicida (strain A449).